A 419-amino-acid polypeptide reads, in one-letter code: MKNQLRGPPARAHMSTSGAAAAGGTRAGSEPGAGSGSGAGTGAGAATGAGAMPCKSAEWLQEELEARGGASLLLLDCRPHELFESSHIETAINLAIPGLMLRRLRKGNLPIRSIIPNHADKERFATRCKAATVLLYDEATAEWQPEPGAPASVLGLLLQKLRDDGCQAYYLQGGFNKFQTEYSEHCETNVDSSSSPSSSPPTSVLGLGGLRISSDCSDGESDRELPSSATESDGSPVPSSQPAFPVQILPYLYLGCAKDSTNLDVLGKYGIKYILNVTPNLPNAFEHGGEFTYKQIPISDHWSQNLSQFFPEAISFIDEARSKKCGVLVHCLAGISRSVTVTVAYLMQKMNLSLNDAYDFVKRKKSNISPNFNFMGQLLDFERTLGLSSPCDNHASSEQLYFSTPTNHNLFPLNTLEST.

Positions 1–47 are disordered; the sequence is MKNQLRGPPARAHMSTSGAAAAGGTRAGSEPGAGSGSGAGTGAGAAT. A compositionally biased stretch (low complexity) spans 10-29; sequence ARAHMSTSGAAAAGGTRAGS. The segment covering 31-47 has biased composition (gly residues); that stretch reads PGAGSGSGAGTGAGAAT. The region spanning 68 to 187 is the Rhodanese domain; the sequence is GGASLLLLDC…FQTEYSEHCE (120 aa). A disordered region spans residues 216–240; the sequence is CSDGESDRELPSSATESDGSPVPSS. Residues 227-240 show a composition bias toward polar residues; that stretch reads SSATESDGSPVPSS. A Tyrosine-protein phosphatase domain is found at 244-387; sequence FPVQILPYLY…LLDFERTLGL (144 aa). Cys331 (phosphocysteine intermediate) is an active-site residue. Position 331 to 337 (331 to 337) interacts with substrate; sequence CLAGISR.

It belongs to the protein-tyrosine phosphatase family. Non-receptor class dual specificity subfamily. As to quaternary structure, interacts with MAPK1/ERK2; the interaction enhances DUSP7 phosphatase activity. As to expression, strongly expressed in liver. Expressed at significantly higher levels in malignant hematopoietic cells than in corresponding non-malignant cells.

Its subcellular location is the cytoplasm. It carries out the reaction O-phospho-L-tyrosyl-[protein] + H2O = L-tyrosyl-[protein] + phosphate. The catalysed reaction is O-phospho-L-seryl-[protein] + H2O = L-seryl-[protein] + phosphate. The enzyme catalyses O-phospho-L-threonyl-[protein] + H2O = L-threonyl-[protein] + phosphate. Strongly inhibited by sodium orthovanadate. Dual specificity protein phosphatase. Shows high activity towards MAPK1/ERK2. Also has lower activity towards MAPK14 and MAPK8. In arrested oocytes, plays a role in meiotic resumption. Promotes nuclear envelope breakdown and activation of the CDK1/Cyclin-B complex in oocytes, probably by dephosphorylating and inactivating the conventional protein kinase C (cPKC) isozyme PRKCB. May also inactivate PRKCA and/or PRKCG. Also important in oocytes for normal chromosome alignment on the metaphase plate and progression to anaphase, where it might regulate activity of the spindle-assembly checkpoint (SAC) complex. This Homo sapiens (Human) protein is Dual specificity protein phosphatase 7.